The chain runs to 344 residues: Dihydroorotate dehydrogenase (quinone) (344 aa).

Residues 65–69 (AGLDK) and T89 each bind FMN. K69 is a binding site for substrate. 114–118 (NRMGF) serves as a coordination point for substrate. 2 residues coordinate FMN: N142 and N175. N175 lines the substrate pocket. The Nucleophile role is filled by S178. Residue N180 coordinates substrate. FMN contacts are provided by K220 and T248. 249–250 (NT) contributes to the substrate binding site. FMN is bound by residues G271, G300, and 321-322 (YT).

This sequence belongs to the dihydroorotate dehydrogenase family. Type 2 subfamily. As to quaternary structure, monomer. Requires FMN as cofactor.

The protein localises to the cell membrane. The catalysed reaction is (S)-dihydroorotate + a quinone = orotate + a quinol. The protein operates within pyrimidine metabolism; UMP biosynthesis via de novo pathway; orotate from (S)-dihydroorotate (quinone route): step 1/1. Functionally, catalyzes the conversion of dihydroorotate to orotate with quinone as electron acceptor. The polypeptide is Dihydroorotate dehydrogenase (quinone) (Paraburkholderia phymatum (strain DSM 17167 / CIP 108236 / LMG 21445 / STM815) (Burkholderia phymatum)).